Consider the following 605-residue polypeptide: Ankyrin repeat domain-containing protein 13D (605 aa).

UIM domains lie at 482-501 (EDDD…AGTE) and 528-547 (EEQL…STES). Over residues 538 to 554 (QESLQLSTESRGPESPQ) the composition is skewed to low complexity. Positions 538 to 605 (QESLQLSTES…RILQLSLTEH (68 aa)) are disordered. The residue at position 552 (Ser-552) is a Phosphoserine. Phosphothreonine is present on Thr-556. Over residues 564 to 575 (SFEEQLRLALEL) the composition is skewed to low complexity. 2 consecutive UIM domains span residues 564-583 (SFEE…QEEL) and 589-605 (QEED…LTEH). Basic and acidic residues predominate over residues 576 to 589 (SSREQEELERRGQQ).

Interacts with EGFR (ubiquitinated); the interaction is direct and may regulate EGFR internalization.

It is found in the cell membrane. Its subcellular location is the late endosome. Its function is as follows. Ubiquitin-binding protein that specifically recognizes and binds 'Lys-63'-linked ubiquitin. Does not bind 'Lys-48'-linked ubiquitin. Positively regulates the internalization of ligand-activated EGFR by binding to the Ub moiety of ubiquitinated EGFR at the cell membrane. This is Ankyrin repeat domain-containing protein 13D (Ankrd13d) from Mus musculus (Mouse).